The sequence spans 153 residues: Ribonuclease H (153 aa).

In terms of domain architecture, RNase H type-1 spans 4–146 (NNEIVEIYTD…CDRLATEQIK (143 aa)). Residues Asp13, Glu51, Asp73, and Asp138 each contribute to the Mg(2+) site.

The protein belongs to the RNase H family. In terms of assembly, monomer. Mg(2+) is required as a cofactor.

It is found in the cytoplasm. The catalysed reaction is Endonucleolytic cleavage to 5'-phosphomonoester.. In terms of biological role, endonuclease that specifically degrades the RNA of RNA-DNA hybrids. The protein is Ribonuclease H of Caldanaerobacter subterraneus subsp. tengcongensis (strain DSM 15242 / JCM 11007 / NBRC 100824 / MB4) (Thermoanaerobacter tengcongensis).